Consider the following 299-residue polypeptide: Fibrinogen silencer-binding protein (299 aa).

A Glycyl lysine isopeptide (Lys-Gly) (interchain with G-Cter in SUMO2) cross-link involves residue lysine 94. Residues glutamate 189–proline 211 form a disordered region. Positions glutamate 192–serine 209 are enriched in polar residues.

Interacts with APBA1 (via PDZ 1 and 2 domains).

It is found in the nucleus. Functionally, transcriptional repressor that down-regulates the expression of the fibrinogen gamma chain. Represses transcription of GSK3B gene promoter via its interaction with APBA1. This Mus musculus (Mouse) protein is Fibrinogen silencer-binding protein (Fsbp).